The chain runs to 119 residues: Dihydroneopterin aldolase (119 aa).

Substrate-binding positions include Glu21, Tyr53, and 72–73 (IE). The active-site Proton donor/acceptor is Lys99.

This sequence belongs to the DHNA family.

The enzyme catalyses 7,8-dihydroneopterin = 6-hydroxymethyl-7,8-dihydropterin + glycolaldehyde. It functions in the pathway cofactor biosynthesis; tetrahydrofolate biosynthesis; 2-amino-4-hydroxy-6-hydroxymethyl-7,8-dihydropteridine diphosphate from 7,8-dihydroneopterin triphosphate: step 3/4. Its function is as follows. Catalyzes the conversion of 7,8-dihydroneopterin to 6-hydroxymethyl-7,8-dihydropterin. The protein is Dihydroneopterin aldolase (folB) of Streptococcus pyogenes serotype M6 (strain ATCC BAA-946 / MGAS10394).